The chain runs to 360 residues: MLVYLAEYLTQFYSGFNVFSYVTFRAILGLMTALVFCLWWGPKMIRRLQTLQIGQVVRSDGPESHFSKSGTPTMGGILILAGIFISVLLWGDLGSRYVWVVLFVLASFGLIGFIDDYRKVVRKDTKGLIARWKYILQSLAAIIIAFYLYASADTVGETQLVVPFFKDIMPQMGAFFIVLAYFTIVGSSNAVNLTDGLDGLAIMPTVMVAAAFALIAYLSGHVQFANYLHIPYLPGAGELVIVCTAIVGAGLGFLWFNTYPAQVFMGDVGSLALGAALGAIAVLVRQEILLVIMGGVFVMETVSVILQVGSYKLRGQRIFRMAPIHHHYELKGWPEPRVIVRFWIISLFLVMLGLATLKLR.

Transmembrane regions (helical) follow at residues 21–41, 74–94, 97–117, 135–155, 168–188, 199–219, 236–256, 263–283, 288–308, and 338–358; these read YVTFRAILGLMTALVFCLWWG, MGGILILAGIFISVLLWGDLG, YVWVVLFVLASFGLIGFIDDY, ILQSLAAIIIAFYLYASADTV, IMPQMGAFFIVLAYFTIVGSS, GLAIMPTVMVAAAFALIAYLS, AGELVIVCTAIVGAGLGFLWF, VFMGDVGSLALGAALGAIAVL, ILLVIMGGVFVMETVSVILQV, and VIVRFWIISLFLVMLGLATLK.

This sequence belongs to the glycosyltransferase 4 family. MraY subfamily. Requires Mg(2+) as cofactor.

It localises to the cell inner membrane. The catalysed reaction is UDP-N-acetyl-alpha-D-muramoyl-L-alanyl-gamma-D-glutamyl-meso-2,6-diaminopimeloyl-D-alanyl-D-alanine + di-trans,octa-cis-undecaprenyl phosphate = di-trans,octa-cis-undecaprenyl diphospho-N-acetyl-alpha-D-muramoyl-L-alanyl-D-glutamyl-meso-2,6-diaminopimeloyl-D-alanyl-D-alanine + UMP. The protein operates within cell wall biogenesis; peptidoglycan biosynthesis. Its function is as follows. Catalyzes the initial step of the lipid cycle reactions in the biosynthesis of the cell wall peptidoglycan: transfers peptidoglycan precursor phospho-MurNAc-pentapeptide from UDP-MurNAc-pentapeptide onto the lipid carrier undecaprenyl phosphate, yielding undecaprenyl-pyrophosphoryl-MurNAc-pentapeptide, known as lipid I. The protein is Phospho-N-acetylmuramoyl-pentapeptide-transferase of Shewanella violacea (strain JCM 10179 / CIP 106290 / LMG 19151 / DSS12).